Consider the following 30-residue polypeptide: MLHLIGFDKLYSYNMVKLALLEKGVPFTEV.

It belongs to the GST superfamily. In terms of assembly, monomer and homodimer.

The protein resides in the cytoplasm. It carries out the reaction RX + glutathione = an S-substituted glutathione + a halide anion + H(+). Its function is as follows. Conjugation of reduced glutathione to a wide number of exogenous and endogenous hydrophobic electrophiles. The sequence is that of Glutathione S-transferase from Pseudomonas fluorescens.